Reading from the N-terminus, the 736-residue chain is MASHSDTLVVFFGATAGANGGKLGSDERELILLVWQIVDLHENKVGKLHRTLVQPDSVDLSEQCKEETGLTAEELCKAEPLESVLQQFHQSVSAELKSLGRSSYTLCVDGPLLIRQVLHPEASKKNLVLPECFYTFVDLKKEFHKCCPNAGPVKDLTLLSMLDYVCIQATVEQEAGLREVKDMVLLILHVLADPYNHKFSAFETVNYKFESGACSKTEAVDSETVIRARGLPWQSSDQDIARFFKGLNIAKGGVALCLNAQGRRNGEALVRFINSEHRDMALDRHKHHMGSRYIEVYKATGEEFLKIAGGTSNEVAQFLSKENQMIIRMRGLPFTATPQDVLGFLGPECPVTDGTEGLLFVKYPDGRPTGDAFVLFACEEYAQNALKKHKQILGKRYIELFRSTAAEVQQVLNRYMSTPLISTLPPPPPPMVSVPVLATPPFITTGNTRDCIRLRGLPYTAAIEDILEFMGEHTIDIKPHGVHMVLNQQGRPSGDAFIQMKSADRAFMVAQKCHKKMMKDRYVEVFQCSTEEMSFVLMGGTLNRSGLSPPPCKLPCLSPPTYAAFPAAPAMLPTEAALYQPPLLATPRTPQAPTHSPAPAFAYYSPQLYMNMNMSYTTYYPSPPVSPSTVSYFAAPPGSVAAAVAAQPTPAILPPQPGALVRMQGLPYNAGVKDILSFFQGYQLQADSVLVLYNWSGQRSGEALVTFPSEKAARRAVAECSNIPLSGHPIHLACCE.

RRM domains follow at residues 224-301, 325-405, and 659-736; these read TVIR…KATG, MIIR…RSTA, and ALVR…ACCE.

Belongs to the ESRP family.

It localises to the nucleus. Its function is as follows. mRNA splicing factor that regulates the formation of epithelial cell-specific isoforms. Specifically regulates the expression of FGFR2-IIIb, an epithelial cell-specific isoform of fgfr2. Acts by directly binding specific sequences in mRNAs. Binds the GU-rich sequence motifs in the ISE/ISS-3, a cis-element regulatory region present in the mRNA of fgfr2. In Danio rerio (Zebrafish), this protein is Epithelial splicing regulatory protein 2 (esrp2).